A 509-amino-acid chain; its full sequence is Monofunctional riboflavin biosynthesis protein RIBA 3, chloroplastic (509 aa).

The transit peptide at 1 to 43 (MMDSALYHPRIFFAHSFINGLYSSPRFANTCWRLVSRSSWEIK) directs the protein to the chloroplast. The interval 44–302 (ASENSDRNVF…LTDLIRYRRK (259 aa)) is inactive DHBP synthase. D-ribulose 5-phosphate-binding positions include 125 to 126 (GD) and 240 to 244 (RAGHT). Positions 303-509 (RDKLVERITV…ISDNNDQPLA (207 aa)) are GTP cyclohydrolase II. 353–357 (RVHSE) provides a ligand contact to GTP. Zn(2+) contacts are provided by Cys-358, Cys-369, and Cys-371. GTP contacts are provided by residues Gln-374, 397-399 (EGR), and Thr-419. Asp-431 serves as the catalytic Proton acceptor; for GTP cyclohydrolase activity. Arg-433 functions as the Nucleophile; for GTP cyclohydrolase activity in the catalytic mechanism. 2 residues coordinate GTP: Thr-454 and Lys-459.

In the N-terminal section; belongs to the DHBP synthase family. It in the C-terminal section; belongs to the GTP cyclohydrolase II family. It depends on Zn(2+) as a cofactor. As to expression, expressed in leaves, shoots, roots, flowers and siliques.

Its subcellular location is the plastid. It localises to the chloroplast. The catalysed reaction is GTP + 4 H2O = 2,5-diamino-6-hydroxy-4-(5-phosphoribosylamino)-pyrimidine + formate + 2 phosphate + 3 H(+). It functions in the pathway cofactor biosynthesis; riboflavin biosynthesis; 5-amino-6-(D-ribitylamino)uracil from GTP: step 1/4. In terms of biological role, involved in riboflavin biosynthesis. Catalyzes the conversion of GTP to 2,5-diamino-6-ribosylamino-4(3H)-pyrimidinone 5'-phosphate (DARP), formate and pyrophosphate. RIBA2 and RIBA3 together are not able to complement the loss of function of RIBA1. The chain is Monofunctional riboflavin biosynthesis protein RIBA 3, chloroplastic (RIBA3) from Arabidopsis thaliana (Mouse-ear cress).